The sequence spans 494 residues: Protein nucleotidyltransferase YdiU (494 aa).

ATP-binding residues include G90, G92, R93, K113, D125, G126, R176, and R183. Residue D252 is the Proton acceptor of the active site. Mg(2+)-binding residues include N253 and D262. D262 serves as a coordination point for ATP.

This sequence belongs to the SELO family. Mg(2+) is required as a cofactor. It depends on Mn(2+) as a cofactor.

It catalyses the reaction L-seryl-[protein] + ATP = 3-O-(5'-adenylyl)-L-seryl-[protein] + diphosphate. It carries out the reaction L-threonyl-[protein] + ATP = 3-O-(5'-adenylyl)-L-threonyl-[protein] + diphosphate. The catalysed reaction is L-tyrosyl-[protein] + ATP = O-(5'-adenylyl)-L-tyrosyl-[protein] + diphosphate. The enzyme catalyses L-histidyl-[protein] + UTP = N(tele)-(5'-uridylyl)-L-histidyl-[protein] + diphosphate. It catalyses the reaction L-seryl-[protein] + UTP = O-(5'-uridylyl)-L-seryl-[protein] + diphosphate. It carries out the reaction L-tyrosyl-[protein] + UTP = O-(5'-uridylyl)-L-tyrosyl-[protein] + diphosphate. Its function is as follows. Nucleotidyltransferase involved in the post-translational modification of proteins. It can catalyze the addition of adenosine monophosphate (AMP) or uridine monophosphate (UMP) to a protein, resulting in modifications known as AMPylation and UMPylation. The chain is Protein nucleotidyltransferase YdiU from Alkalilimnicola ehrlichii (strain ATCC BAA-1101 / DSM 17681 / MLHE-1).